The sequence spans 523 residues: GMP synthase [glutamine-hydrolyzing] (523 aa).

The Glutamine amidotransferase type-1 domain occupies 8–205 (KILILDFGSQ…VVNICGCETK (198 aa)). The Nucleophile role is filled by Cys-85. Active-site residues include His-179 and Glu-181. The GMPS ATP-PPase domain occupies 206-398 (WTAENIIEDA…LGLPAEMINR (193 aa)). 233-239 (SGGVDSS) lines the ATP pocket.

In terms of assembly, homodimer.

The catalysed reaction is XMP + L-glutamine + ATP + H2O = GMP + L-glutamate + AMP + diphosphate + 2 H(+). It participates in purine metabolism; GMP biosynthesis; GMP from XMP (L-Gln route): step 1/1. Functionally, catalyzes the synthesis of GMP from XMP. This chain is GMP synthase [glutamine-hydrolyzing], found in Haemophilus influenzae (strain PittGG).